Consider the following 347-residue polypeptide: 4-hydroxy-2-oxovalerate aldolase (347 aa).

The Pyruvate carboxyltransferase domain occupies 2–252 (ILISDATLRD…DTRTTFERVM (251 aa)). 10–11 (RD) contacts substrate. A Mn(2+)-binding site is contributed by aspartate 11. The Proton acceptor role is filled by histidine 14. Positions 164 and 191 each coordinate substrate. Residues histidine 191 and histidine 193 each contribute to the Mn(2+) site.

This sequence belongs to the 4-hydroxy-2-oxovalerate aldolase family.

It catalyses the reaction (S)-4-hydroxy-2-oxopentanoate = acetaldehyde + pyruvate. This is 4-hydroxy-2-oxovalerate aldolase (mhpE) from Burkholderia pseudomallei (strain 1710b).